The primary structure comprises 453 residues: Acid phosphatase (453 aa).

Positions 1–18 (MFLQNLFLGFLAVVCANA) are cleaved as a signal peptide. The active-site Nucleophile is the H69. 6 N-linked (GlcNAc...) asparagine glycosylation sites follow: N95, N151, N183, N193, N243, and N319. D331 serves as the catalytic Proton donor. N410, N429, and N443 each carry an N-linked (GlcNAc...) asparagine glycan.

This sequence belongs to the histidine acid phosphatase family.

The protein localises to the secreted. It is found in the cell wall. It catalyses the reaction a phosphate monoester + H2O = an alcohol + phosphate. The sequence is that of Acid phosphatase (pho1) from Schizosaccharomyces pombe (strain 972 / ATCC 24843) (Fission yeast).